We begin with the raw amino-acid sequence, 222 residues long: Uracil-DNA glycosylase (222 aa).

The Proton acceptor role is filled by Asp66.

This sequence belongs to the uracil-DNA glycosylase (UDG) superfamily. UNG family.

The protein localises to the cytoplasm. It catalyses the reaction Hydrolyzes single-stranded DNA or mismatched double-stranded DNA and polynucleotides, releasing free uracil.. Functionally, excises uracil residues from the DNA which can arise as a result of misincorporation of dUMP residues by DNA polymerase or due to deamination of cytosine. This is Uracil-DNA glycosylase from Porphyromonas gingivalis (strain ATCC BAA-308 / W83).